The primary structure comprises 1479 residues: Type VII secretion system protein EssC (1479 aa).

Over 1–229 (MHKLIIKYNK…RPPQPIQKNN (229 aa)) the chain is Cytoplasmic. A helical membrane pass occupies residues 230–252 (TVIWRSIIPPLVMIALTVVIFLV). The Extracellular portion of the chain corresponds to 253 to 256 (RPIG). The chain crosses the membrane as a helical span at residues 257 to 279 (IYILMMIGMSTVTIVFGITTYFS). At 280 to 1479 (EKKKYNKDVE…QAYQKIRWFK (1200 aa)) the chain is on the cytoplasmic side. FtsK domains are found at residues 652–846 (DDIL…QDSN) and 997–1183 (QGPM…SEVS). ATP contacts are provided by residues 672 to 679 (GTTGSGKS) and 1014 to 1021 (GSPGYGRT).

This sequence belongs to the EssC family. Homooligomer. Interacts with EsaE.

The protein resides in the cell membrane. Functionally, component of the type VII secretion system (Ess). Required for the secretion of substrates including EsxA and EsxB. However, unable to support secretion of the substrate protein EsxC. This Staphylococcus aureus (strain Mu50 / ATCC 700699) protein is Type VII secretion system protein EssC.